The sequence spans 399 residues: CCA-adding enzyme (399 aa).

Residues glycine 32 and arginine 35 each coordinate ATP. Residues glycine 32 and arginine 35 each coordinate CTP. Residues aspartate 45 and aspartate 47 each contribute to the Mg(2+) site. Residues arginine 116, aspartate 159, arginine 162, arginine 165, and arginine 168 each contribute to the ATP site. CTP-binding residues include arginine 116, aspartate 159, arginine 162, arginine 165, and arginine 168.

This sequence belongs to the tRNA nucleotidyltransferase/poly(A) polymerase family. Bacterial CCA-adding enzyme type 3 subfamily. In terms of assembly, homodimer. It depends on Mg(2+) as a cofactor.

The enzyme catalyses a tRNA precursor + 2 CTP + ATP = a tRNA with a 3' CCA end + 3 diphosphate. It catalyses the reaction a tRNA with a 3' CCA end + 2 CTP + ATP = a tRNA with a 3' CCACCA end + 3 diphosphate. In terms of biological role, catalyzes the addition and repair of the essential 3'-terminal CCA sequence in tRNAs without using a nucleic acid template. Adds these three nucleotides in the order of C, C, and A to the tRNA nucleotide-73, using CTP and ATP as substrates and producing inorganic pyrophosphate. tRNA 3'-terminal CCA addition is required both for tRNA processing and repair. Also involved in tRNA surveillance by mediating tandem CCA addition to generate a CCACCA at the 3' terminus of unstable tRNAs. While stable tRNAs receive only 3'-terminal CCA, unstable tRNAs are marked with CCACCA and rapidly degraded. The polypeptide is CCA-adding enzyme (Streptococcus sanguinis (strain SK36)).